The primary structure comprises 240 residues: RxLR effector protein PexRD20 (240 aa).

Residues Met1–Ala23 form the signal peptide. Residues Arg43–Arg58 carry the RxLR-dEER motif.

This sequence belongs to the RxLR effector family.

It is found in the secreted. Its subcellular location is the host cytoplasm. It localises to the host nucleus. The protein resides in the host nucleolus. In terms of biological role, effector that enhances P.infestans colonization of Nicotiana benthamiana leaves. The polypeptide is RxLR effector protein PexRD20 (Phytophthora infestans (strain T30-4) (Potato late blight agent)).